A 351-amino-acid chain; its full sequence is Uroporphyrinogen decarboxylase (351 aa).

Substrate contacts are provided by residues arginine 26–arginine 30, phenylalanine 45, aspartate 76, tyrosine 153, serine 208, and histidine 323.

This sequence belongs to the uroporphyrinogen decarboxylase family. In terms of assembly, homodimer.

Its subcellular location is the cytoplasm. It carries out the reaction uroporphyrinogen III + 4 H(+) = coproporphyrinogen III + 4 CO2. It participates in porphyrin-containing compound metabolism; protoporphyrin-IX biosynthesis; coproporphyrinogen-III from 5-aminolevulinate: step 4/4. In terms of biological role, catalyzes the decarboxylation of four acetate groups of uroporphyrinogen-III to yield coproporphyrinogen-III. The protein is Uroporphyrinogen decarboxylase of Prochlorococcus marinus (strain SARG / CCMP1375 / SS120).